Consider the following 219-residue polypeptide: 2-hydroxy-3-keto-5-methylthiopentenyl-1-phosphate phosphatase (219 aa).

The protein belongs to the HAD-like hydrolase superfamily. MtnX family.

It catalyses the reaction 2-hydroxy-5-methylsulfanyl-3-oxopent-1-enyl phosphate + H2O = 1,2-dihydroxy-5-(methylsulfanyl)pent-1-en-3-one + phosphate. The protein operates within amino-acid biosynthesis; L-methionine biosynthesis via salvage pathway; L-methionine from S-methyl-5-thio-alpha-D-ribose 1-phosphate: step 4/6. Its function is as follows. Dephosphorylates 2-hydroxy-3-keto-5-methylthiopentenyl-1-phosphate (HK-MTPenyl-1-P) yielding 1,2-dihydroxy-3-keto-5-methylthiopentene (DHK-MTPene). In Bacillus cereus (strain B4264), this protein is 2-hydroxy-3-keto-5-methylthiopentenyl-1-phosphate phosphatase.